The chain runs to 315 residues: MVAIDQHDTYSVRVISRSHLSKDIVQVELEESSQRPLPDYEPGSHVDIYVQDDLVRQYSLVKASDAQASYQIAFKVKRDQGSATELMCELLRVGATTRISAPRNAFALDPQARETVLICGGIGITPMVHMAMTLVKAKRPWSMHIASRDGDELDLLGPLGSCSEISRYISSQGDRLPIRDLAERAPANAHLYFCGPEGMLQEFLAATQHRDPATVHYEQFQAAPSTGNEFTVNLARSGAQYVVREGETILDVLRNAGHHVTSSCRQGICGMCETTLISGVPDHRDRLLTDSEKASGRTMLICCSRALSPELTLDL.

1-103 (MVAIDQHDTY…GATTRISAPR (103 aa)) is a binding site for FMN. One can recognise an FAD-binding FR-type domain in the interval 7 to 109 (HDTYSVRVIS…SAPRNAFALD (103 aa)). Positions 228–315 (NEFTVNLARS…ALSPELTLDL (88 aa)) constitute a 2Fe-2S ferredoxin-type domain. Residues Cys264, Cys269, Cys272, and Cys302 each contribute to the [2Fe-2S] cluster site.

The protein belongs to the PDR/VanB family. In terms of assembly, this dioxygenase system consists of two proteins: phthalate oxygenase and phthalate oxygenase reductase. It depends on FMN as a cofactor.

In Comamonas testosteroni (Pseudomonas testosteroni), this protein is 3-chlorobenzoate-3,4-dioxygenase reductase subunit (cbaB).